The chain runs to 322 residues: Cytochrome c biogenesis protein CcsA (322 aa).

Helical transmembrane passes span 6 to 26 (LQLI…FLFF), 45 to 65 (LIAN…AGYF), 69 to 89 (NLYE…LFLY), 97 to 117 (LLDN…HFIL), 144 to 164 (MISY…LYFL), 230 to 250 (LITF…VWAN), 265 to 285 (WALI…IKGW), and 291 to 311 (AMVA…VNLL).

It belongs to the CcmF/CycK/Ccl1/NrfE/CcsA family. As to quaternary structure, may interact with Ccs1.

It is found in the plastid. It localises to the cyanelle thylakoid membrane. Its function is as follows. Required during biogenesis of c-type cytochromes (cytochrome c6 and cytochrome f) at the step of heme attachment. In Cyanophora paradoxa, this protein is Cytochrome c biogenesis protein CcsA.